A 330-amino-acid polypeptide reads, in one-letter code: MLSTKRLRVLELYSGIGGMHYALNLANIPADIVCAIDINPQANEIYNLNHGKLAKHMDISTLTAKDFDAFDCKLWTMSPSCQPFTRIGNRKDILDPRSQAFLNILNVLPHVNNLPEYILIENVQGFEESKAAEECRKVLRNCGYNLIEGILSPNQFNIPNSRSRWYGLARLNFKGEWSIDDVFQFSEVAQKEGEVKRIRDYLEIERDWSSYMVLESVLNKWGHQFDIVKPDSSSCCCFTRGYTHLVQGAGSILQMSDHENTHEQFERNRMALQLRYFTAREVARLMGFPESLEWSKSNVTEKCMYRLLGNSINVKVVSYLISLLLEPLNF.

Residues 7-330 form the SAM-dependent MTase C5-type domain; the sequence is LRVLELYSGI…ISLLLEPLNF (324 aa). Residue Cys81 is part of the active site.

It belongs to the class I-like SAM-binding methyltransferase superfamily. C5-methyltransferase family.

The protein resides in the cytoplasm. It localises to the nucleus. The enzyme catalyses cytidine(38) in tRNA + S-adenosyl-L-methionine = 5-methylcytidine(38) in tRNA + S-adenosyl-L-homocysteine + H(+). Specifically methylates cytosine 38 in the anticodon loop of tRNA(Asp). Can also methylate cytosine 38 in tRNA(Glu), albeit to a lower level, but not tRNA(Lys). Pmt1-dependent tRNA methylation is induced by nitrogen limitation and depends on the nutrient-sensing protein kinase sck2. Does not have DNA-methylation activity. This Schizosaccharomyces pombe (strain 972 / ATCC 24843) (Fission yeast) protein is tRNA (cytosine(38)-C(5))-methyltransferase (pmt1).